Here is a 606-residue protein sequence, read N- to C-terminus: Mitogen-activated protein kinase kinase kinase 7 (606 aa).

Residues 1 to 300 (MSTASAASSS…FPGADEPLQY (300 aa)) form an interaction with MAPK8IP1 region. The Protein kinase domain occupies 36–291 (IEVEEVVGRG…KIMTHLMRYF (256 aa)). ATP contacts are provided by residues 42–50 (VGRGAFGVV) and K63. K72 participates in a covalent cross-link: Glycyl lysine isopeptide (Lys-Gly) (interchain with G-Cter in ubiquitin). Catalysis depends on D156, which acts as the Proton acceptor. K158 participates in a covalent cross-link: Glycyl lysine isopeptide (Lys-Gly) (interchain with G-Cter in ubiquitin). (Microbial infection) O-acetylthreonine; by Yersinia YopJ; alternate occurs at positions 184 and 187. Residues T184 and T187 each carry the phosphothreonine; by autocatalysis; alternate modification. At S192 the chain carries Phosphoserine; by autocatalysis. Residue K209 forms a Glycyl lysine isopeptide (Lys-Gly) (interchain with G-Cter in ubiquitin) linkage. Positions 301 to 338 (PCQYSDEGQSNSATSTGSFMDIASTNTSNKSDTNMEQV) are disordered. The span at 306-338 (DEGQSNSATSTGSFMDIASTNTSNKSDTNMEQV) shows a compositional bias: polar residues. T341 bears the (Microbial infection) O-acetylthreonine; by Yersinia YopJ; alternate mark. Residues 354–391 (KNQAKQQSESGRLSLGASRGSSVESLPPTSEGKRMSAD) are disordered. The segment covering 361 to 375 (SESGRLSLGASRGSS) has biased composition (low complexity). Phosphoserine occurs at positions 367, 389, and 439. Residues 443–452 (LTVTGTEPGQ) are compositionally biased toward polar residues. The segment at 443 to 493 (LTVTGTEPGQVSSRSSSPSVRMITTSGPTSEKPTRSHPWTPDDSTDTNGSD) is disordered. T444, T446, and T448 each carry (Microbial infection) O-acetylthreonine; by Yersinia YopJ; alternate. The segment covering 453-463 (VSSRSSSPSVR) has biased composition (low complexity). A Phosphoserine modification is found at S455. The segment covering 464-473 (MITTSGPTSE) has biased composition (polar residues). T467 is modified ((Microbial infection) O-acetylthreonine; by Yersinia YopJ; alternate).

It belongs to the protein kinase superfamily. STE Ser/Thr protein kinase family. MAP kinase kinase kinase subfamily. In terms of assembly, can form homodimer. Binds both upstream activators and downstream substrates in multimolecular complexes. Interacts with TAB1/MAP3K7IP1, TAB2/MAP3K7IP2 and TAB3/MAP3K7IP3. Identified in the TRIKA2 complex composed of MAP3K7/TAK1, TAB1/MAP3K7IP1 and TAB2/MAP3K7IP2. Interacts with PPM1L and PPM1B/PP2CB. Interaction with PP2A and PPP6C leads to its repressed activity. Interacts with TRAF6 and TAB1/MAP3K7IP1; during IL-1 signaling. Interacts with TAOK1 and TAOK2; interaction with TAOK2 interferes with MAP3K7 interaction with IKKA, thus preventing NF-kappa-B activation. Interacts with DYNC2I2 (via WD domains). Interacts with CYLD and RBCK1. Interacts with TGFBR1; induces MAP3K7/TAK1 activation by TRAF6. Interacts with MAPK8IP1 and SMAD6. Interacts with isoform 1 of VRK2. Interacts with DAB2; the interaction is induced by TGF-beta stimulation and may mediate TGF-beta stimulated JNK activation. Interacts with TRIM5. Part of a complex containing ITCH, NDFIP1 and MAP3K7. Interacts with IFIT5; the interaction synergizes the recruitment of IKK to MAP3K7 and enhances IKK phosphorylation. Interacts with PLEKHM1 (via N- and C-terminus). Interacts with TRIM8. Found in a complex with SH3RF1, RAC2, MAP2K7/MKK7, MAPK8IP1/JIP1, MAPK8/JNK1 and MAPK9/JNK2. Interacts with SASH1. Interacts with RIPK1. As to quaternary structure, (Microbial infection) Interacts with herpes simplex virus 2 protein US2; this interaction induces MAP3K7 phosphorylation and subsequent activation. Mg(2+) serves as cofactor. Association with TAB1/MAP3K7IP1 promotes autophosphorylation at Ser-192 and subsequent activation. Association with TAB2/MAP3K7IP2, itself associated with free unanchored Lys-63 polyubiquitin chain, promotes autophosphorylation and subsequent activation of MAP3K7. Dephosphorylation at Ser-192 by PPM1B/PP2CB and at Thr-187 by PP2A and PPP6C leads to inactivation. Post-translationally, 'Lys-48'-linked polyubiquitination at Lys-72 is induced by TNFalpha, and leads to proteasomal degradation. Undergoes 'Lys-48'-linked polyubiquitination catalyzed by ITCH. Requires 'Lys-63'-linked polyubiquitination for autophosphorylation and subsequent activation. 'Lys-63'-linked ubiquitination does not lead to proteasomal degradation. Deubiquitinated by CYLD, a protease that selectively cleaves 'Lys-63'-linked ubiquitin chains. Deubiquitinated by Y.enterocolitica YopP. Deubiquitinated by USP19; leading to negative regulation of TNF-alpha- and IL-1beta-triggered NF-kappa-B activation. In terms of processing, (Microbial infection) Cleaved and inactivated by the proteases 3C of coxsackievirus A16 and human enterovirus D68, allowing the virus to disrupt TRAF6-triggered NF-kappa-B induction. (Microbial infection) Acetylation of Thr-184 and Thr-187 by Yersinia YopJ prevents phosphorylation and activation, thus blocking the MAPK signaling pathway. Isoform 1A is the most abundant in ovary, skeletal muscle, spleen and blood mononuclear cells. Isoform 1B is highly expressed in brain, kidney and small intestine. Isoform 1C is the major form in prostate. Isoform 1D is the less abundant form.

Its subcellular location is the cytoplasm. The protein localises to the cell membrane. It catalyses the reaction L-seryl-[protein] + ATP = O-phospho-L-seryl-[protein] + ADP + H(+). It carries out the reaction L-threonyl-[protein] + ATP = O-phospho-L-threonyl-[protein] + ADP + H(+). Activated by pro-inflammatory cytokines and in response to physical and chemical stresses, including osmotic stress, oxidative stress, arsenic and ultraviolet light irradiation. Activated by 'Lys-63'-linked polyubiquitination and by autophosphorylation. Association with TAB1/MAP3K7IP1 and TAB2/MAP3K7IP2 promotes activation through autophosphorylation, whereas PPM1B/PP2CB, PP2A and PPP6C dephosphorylation leads to inactivation. Ceramides are also able to activate MAP3K7/TAK1. Serine/threonine kinase which acts as an essential component of the MAP kinase signal transduction pathway. Plays an important role in the cascades of cellular responses evoked by changes in the environment. Mediates signal transduction of TRAF6, various cytokines including interleukin-1 (IL-1), transforming growth factor-beta (TGFB), TGFB-related factors like BMP2 and BMP4, toll-like receptors (TLR), tumor necrosis factor receptor CD40 and B-cell receptor (BCR). Once activated, acts as an upstream activator of the MKK/JNK signal transduction cascade and the p38 MAPK signal transduction cascade through the phosphorylation and activation of several MAP kinase kinases like MAP2K1/MEK1, MAP2K3/MKK3, MAP2K6/MKK6 and MAP2K7/MKK7. These MAP2Ks in turn activate p38 MAPKs and c-jun N-terminal kinases (JNKs); both p38 MAPK and JNK pathways control the transcription factors activator protein-1 (AP-1). Independently of MAP2Ks and p38 MAPKs, acts as a key activator of NF-kappa-B by promoting activation of the I-kappa-B-kinase (IKK) core complex. Mechanistically, recruited to polyubiquitin chains of RIPK2 and IKBKG/NEMO via TAB2/MAP3K7IP2 and TAB3/MAP3K7IP3, and catalyzes phosphorylation and activation of IKBKB/IKKB component of the IKK complex, leading to NF-kappa-B activation. In osmotic stress signaling, plays a major role in the activation of MAPK8/JNK1, but not that of NF-kappa-B. Promotes TRIM5 capsid-specific restriction activity. Phosphorylates RIPK1 at 'Ser-321' which positively regulates RIPK1 interaction with RIPK3 to promote necroptosis but negatively regulates RIPK1 kinase activity and its interaction with FADD to mediate apoptosis. Phosphorylates STING1 in response to cGAMP-activation, promoting association between STEEP1 and STING1 and STING1 translocation to COPII vesicles. The sequence is that of Mitogen-activated protein kinase kinase kinase 7 from Homo sapiens (Human).